We begin with the raw amino-acid sequence, 179 residues long: MAELDRKELADLVRRLSVVQGCVTLSSGKQADHYVDLRRATLHHRASALIGRLMRELTKDWNYTVVGGLTLGADPVAIAIIHSPGRPIDAFVVRKYAKTHGLQRLIEGSEVSGQRVLVVEDTSTTGASALTAVRAVQDAGGDVVGVATVVDRGTGAAEAIKAEGLLYRSVLGLADLGLG.

5-phospho-alpha-D-ribose 1-diphosphate-binding positions include arginine 94, lysine 95, lysine 98, histidine 100, and 120–128; that span reads EDTSTTGAS. 2 residues coordinate orotate: threonine 124 and arginine 152.

The protein belongs to the purine/pyrimidine phosphoribosyltransferase family. PyrE subfamily. Homodimer. Mg(2+) is required as a cofactor.

It carries out the reaction orotidine 5'-phosphate + diphosphate = orotate + 5-phospho-alpha-D-ribose 1-diphosphate. It functions in the pathway pyrimidine metabolism; UMP biosynthesis via de novo pathway; UMP from orotate: step 1/2. In terms of biological role, catalyzes the transfer of a ribosyl phosphate group from 5-phosphoribose 1-diphosphate to orotate, leading to the formation of orotidine monophosphate (OMP). This Mycobacterium leprae (strain TN) protein is Orotate phosphoribosyltransferase.